Here is a 230-residue protein sequence, read N- to C-terminus: UPF0173 metal-dependent hydrolase MM_2300 (230 aa).

Belongs to the UPF0173 family.

The chain is UPF0173 metal-dependent hydrolase MM_2300 from Methanosarcina mazei (strain ATCC BAA-159 / DSM 3647 / Goe1 / Go1 / JCM 11833 / OCM 88) (Methanosarcina frisia).